A 276-amino-acid polypeptide reads, in one-letter code: Probable transposase for insertion sequence element IS702 (276 aa).

The region spanning 118–256 (MDVTESPIER…SNQYRNRHRR (139 aa)) is the DDE Tnp4 domain. Aspartate 119, aspartate 170, aspartate 190, and glutamate 234 together coordinate a divalent metal cation.

This sequence belongs to the transposase 11 family. It depends on a divalent metal cation as a cofactor.

Its function is as follows. Involved in the transposition of the insertion sequence. In Microchaete diplosiphon (Fremyella diplosiphon), this protein is Probable transposase for insertion sequence element IS702.